The chain runs to 380 residues: METNLLLVKCVLLASCLIHPRACSPSCNFPAIFNFGDSNSDTGGLSASFGQAPYPNGQTFFHSPSGRFSDGRLIIDFIAEELGLPYLNAFLDSIGSNFSHGANFATAGSTVRPPNATIAQSGVSPISLDVQLVQFSDFITRSQLIRNRGGVFKKLLPKKEYFSQALYTFDIGQNDLTAGLKLNMTSDQIKAYIPDVHDQLSNVIRKVYSKGGRRFWIHNTAPLGCLPYVLDRFPVPASQIDNHGCAIPRNEIARYYNSELKRRVIELRKELSEAAFTYVDIYSIKLTLITQAKKLGFRYPLVACCGHGGKYNFNKLIKCGAKVMIKGKEIVLAKSCNDVSFRVSWDGIHFTETTNSWIFQQINDGAFSDPPLPVKSACTR.

An N-terminal signal peptide occupies residues 1-25 (METNLLLVKCVLLASCLIHPRACSP). Ser-38 serves as the catalytic Nucleophile. N-linked (GlcNAc...) asparagine glycans are attached at residues Asn-97, Asn-115, and Asn-183. Active-site residues include Asp-346 and His-349.

The protein belongs to the 'GDSL' lipolytic enzyme family.

It is found in the secreted. The catalysed reaction is hexadecanoate ester + H2O = an aliphatic alcohol + hexadecanoate + H(+). The enzyme catalyses a butanoate ester + H2O = an aliphatic alcohol + butanoate + H(+). Its activity is regulated as follows. Lipase activity is inhibited by phenylmethylsulfonyl fluoride (PMSF), but not neostigmine bromide (NB). Functionally, lipase that can hydrolyze p-nitrophenyl butyrate and p-nitrophenyl palmitate in vitro. Possesses low activity against p-nitrophenyl acetate. Substrate preference is p-nitrophenyl palmitate &gt; p-nitrophenyl butyrate &gt;&gt; p-nitrophenyl acetate. Lacks cholinesterase activity. In Arabidopsis thaliana (Mouse-ear cress), this protein is GDSL esterase/lipase At3g26430.